We begin with the raw amino-acid sequence, 257 residues long: Uracil phosphoribosyltransferase homolog (257 aa).

GTP is bound by residues Arg81, Arg90, and 124-127 (EKGN). Arg134 contributes to the 5-phospho-alpha-D-ribose 1-diphosphate binding site. Residues Arg151 and Arg180 each coordinate GTP. 186–194 (YPILSTGNT) is a binding site for 5-phospho-alpha-D-ribose 1-diphosphate. Position 247-249 (247-249 (THF)) interacts with uracil.

The protein belongs to the UPRTase family.

The protein localises to the cytoplasm. It localises to the nucleus. The polypeptide is Uracil phosphoribosyltransferase homolog (uprt) (Danio rerio (Zebrafish)).